Here is a 367-residue protein sequence, read N- to C-terminus: UDP-N-acetylglucosamine--N-acetylmuramyl-(pentapeptide) pyrophosphoryl-undecaprenol N-acetylglucosamine transferase (367 aa).

Residues 21-23, Asn-129, Arg-170, Ser-198, and Gln-295 contribute to the UDP-N-acetyl-alpha-D-glucosamine site; that span reads TGG.

The protein belongs to the glycosyltransferase 28 family. MurG subfamily.

It localises to the cell inner membrane. It carries out the reaction di-trans,octa-cis-undecaprenyl diphospho-N-acetyl-alpha-D-muramoyl-L-alanyl-D-glutamyl-meso-2,6-diaminopimeloyl-D-alanyl-D-alanine + UDP-N-acetyl-alpha-D-glucosamine = di-trans,octa-cis-undecaprenyl diphospho-[N-acetyl-alpha-D-glucosaminyl-(1-&gt;4)]-N-acetyl-alpha-D-muramoyl-L-alanyl-D-glutamyl-meso-2,6-diaminopimeloyl-D-alanyl-D-alanine + UDP + H(+). Its pathway is cell wall biogenesis; peptidoglycan biosynthesis. Its function is as follows. Cell wall formation. Catalyzes the transfer of a GlcNAc subunit on undecaprenyl-pyrophosphoryl-MurNAc-pentapeptide (lipid intermediate I) to form undecaprenyl-pyrophosphoryl-MurNAc-(pentapeptide)GlcNAc (lipid intermediate II). In Synechococcus sp. (strain JA-2-3B'a(2-13)) (Cyanobacteria bacterium Yellowstone B-Prime), this protein is UDP-N-acetylglucosamine--N-acetylmuramyl-(pentapeptide) pyrophosphoryl-undecaprenol N-acetylglucosamine transferase.